A 50-amino-acid polypeptide reads, in one-letter code: Large ribosomal subunit protein eL39 (50 aa).

Positions 1–12 (MGKKSKAKKKRL) are enriched in basic residues. Residues 1-21 (MGKKSKAKKKRLGKLEKQNSR) are disordered.

This sequence belongs to the eukaryotic ribosomal protein eL39 family.

This chain is Large ribosomal subunit protein eL39, found in Haloquadratum walsbyi (strain DSM 16790 / HBSQ001).